A 479-amino-acid polypeptide reads, in one-letter code: Sulfate adenylyltransferase subunit 1 (479 aa).

Residues 25-239 (KSLLRFLTCG…EVLETVDIQR (215 aa)) enclose the tr-type G domain. Residues 34 to 41 (GSVDDGKS) are G1. A GTP-binding site is contributed by 34–41 (GSVDDGKS). A G2 region spans residues 92 to 96 (GITID). The segment at 113–116 (DTPG) is G3. Residues 113 to 117 (DTPGH) and 168 to 171 (NKMD) each bind GTP. Residues 168–171 (NKMD) form a G4 region. The G5 stretch occupies residues 206–208 (SAL).

It belongs to the TRAFAC class translation factor GTPase superfamily. Classic translation factor GTPase family. CysN/NodQ subfamily. As to quaternary structure, heterodimer composed of CysD, the smaller subunit, and CysN.

The enzyme catalyses sulfate + ATP + H(+) = adenosine 5'-phosphosulfate + diphosphate. It participates in sulfur metabolism; hydrogen sulfide biosynthesis; sulfite from sulfate: step 1/3. Its function is as follows. With CysD forms the ATP sulfurylase (ATPS) that catalyzes the adenylation of sulfate producing adenosine 5'-phosphosulfate (APS) and diphosphate, the first enzymatic step in sulfur assimilation pathway. APS synthesis involves the formation of a high-energy phosphoric-sulfuric acid anhydride bond driven by GTP hydrolysis by CysN coupled to ATP hydrolysis by CysD. The chain is Sulfate adenylyltransferase subunit 1 from Salmonella arizonae (strain ATCC BAA-731 / CDC346-86 / RSK2980).